The sequence spans 117 residues: Large ribosomal subunit protein bL19 (117 aa).

This sequence belongs to the bacterial ribosomal protein bL19 family.

In terms of biological role, this protein is located at the 30S-50S ribosomal subunit interface and may play a role in the structure and function of the aminoacyl-tRNA binding site. The chain is Large ribosomal subunit protein bL19 from Blochmanniella floridana.